Consider the following 197-residue polypeptide: MDMQSRIRRLFQASIDTKQQAMDILAPHIEQASLVMVNALLNEGKMLACGNGGSAGDAQHFSSELLNRFERERPSLPAIALTTDSSTLTSIANDYSYNEIFSKQIRALGQPGDVLLAISTSGNSANVIQAIQAAHDREMIVVALTGRDGGGMASLLLPEDVEIRVPSTVTARIQEVHLLAIHCLCDLIDSQLFGSEE.

Residues 36 to 197 (MVNALLNEGK…IDSQLFGSEE (162 aa)) form the SIS domain. Position 51–53 (51–53 (NGG)) interacts with substrate. Zn(2+) contacts are provided by histidine 60 and glutamate 64. Residues glutamate 64, 93 to 94 (ND), 119 to 121 (STS), serine 124, and glutamine 174 each bind substrate. The Zn(2+) site is built by glutamine 174 and histidine 182.

This sequence belongs to the SIS family. GmhA subfamily. As to quaternary structure, homotetramer. Zn(2+) is required as a cofactor.

It localises to the cytoplasm. The catalysed reaction is 2 D-sedoheptulose 7-phosphate = D-glycero-alpha-D-manno-heptose 7-phosphate + D-glycero-beta-D-manno-heptose 7-phosphate. Its pathway is carbohydrate biosynthesis; D-glycero-D-manno-heptose 7-phosphate biosynthesis; D-glycero-alpha-D-manno-heptose 7-phosphate and D-glycero-beta-D-manno-heptose 7-phosphate from sedoheptulose 7-phosphate: step 1/1. Functionally, catalyzes the isomerization of sedoheptulose 7-phosphate in D-glycero-D-manno-heptose 7-phosphate. This Pseudomonas putida (strain W619) protein is Phosphoheptose isomerase.